We begin with the raw amino-acid sequence, 140 residues long: RxLR effector protein CRE2 (140 aa).

The first 24 residues, 1 to 24 (MRWLIWTAVSTLVMLLAMTEVSAS), serve as a signal peptide directing secretion. The RxLR-dEER motif lies at 56-72 (RSLRDKSSSLITESEER).

This sequence belongs to the RxLR effector family.

The protein localises to the secreted. Its subcellular location is the host cell. Its function is as follows. Effector that is involved in host plant infection. Contributes to virulence during the early infection stage, by inhibiting plant defense responses induced by both PAMP-triggered immunity (PTI) and effector-triggered immunity (ETI). The protein is RxLR effector protein CRE2 of Phytophthora infestans (strain T30-4) (Potato late blight agent).